The chain runs to 184 residues: Adenine phosphoribosyltransferase (184 aa).

This sequence belongs to the purine/pyrimidine phosphoribosyltransferase family. As to quaternary structure, homodimer.

Its subcellular location is the cytoplasm. It catalyses the reaction AMP + diphosphate = 5-phospho-alpha-D-ribose 1-diphosphate + adenine. The protein operates within purine metabolism; AMP biosynthesis via salvage pathway; AMP from adenine: step 1/1. Catalyzes a salvage reaction resulting in the formation of AMP, that is energically less costly than de novo synthesis. The sequence is that of Adenine phosphoribosyltransferase from Parafrankia sp. (strain EAN1pec).